Reading from the N-terminus, the 802-residue chain is Leucine--tRNA ligase (802 aa).

The short motif at 39 to 50 is the 'HIGH' region element; that stretch reads PYPSGAGLHVGH. The 'KMSKS' region signature appears at 574-578; the sequence is KMSKS. Residue K577 participates in ATP binding.

Belongs to the class-I aminoacyl-tRNA synthetase family.

It is found in the cytoplasm. It carries out the reaction tRNA(Leu) + L-leucine + ATP = L-leucyl-tRNA(Leu) + AMP + diphosphate. This chain is Leucine--tRNA ligase, found in Macrococcus caseolyticus (strain JCSC5402) (Macrococcoides caseolyticum).